A 56-amino-acid chain; its full sequence is uncharacterized protein (56 aa).

The tract at residues 15–56 (SIGNISSGNINNSIGNSSSSGCDDVFNNSTNNNNNNNNNNNK) is disordered.

This is an uncharacterized protein from Dictyostelium discoideum (Social amoeba).